The following is a 106-amino-acid chain: NADH dehydrogenase [ubiquinone] iron-sulfur protein 5 (106 aa).

Residues 30–74 enclose the CHCH domain; that stretch reads PSRCHAFEKEWIECAHGIGSIRAEKECKIEFEDFRECLLRQKTMK. 2 consecutive short sequence motifs (cx9C motif) follow at residues 33–43 and 56–66; these read CHAFEKEWIEC and CKIEFEDFREC. 2 disulfide bridges follow: C33-C66 and C43-C56. The segment at 84-106 is disordered; sequence EKLIKEGKYTPPPHHSGQEEPRS.

It belongs to the complex I NDUFS5 subunit family. As to quaternary structure, mammalian complex I is composed of 45 different subunits. This is a component of the iron-sulfur (IP) fragment of the enzyme.

The protein resides in the mitochondrion inner membrane. It localises to the mitochondrion intermembrane space. Accessory subunit of the mitochondrial membrane respiratory chain NADH dehydrogenase (Complex I), that is believed not to be involved in catalysis. Complex I functions in the transfer of electrons from NADH to the respiratory chain. The immediate electron acceptor for the enzyme is believed to be ubiquinone. The polypeptide is NADH dehydrogenase [ubiquinone] iron-sulfur protein 5 (NDUFS5) (Bos taurus (Bovine)).